The sequence spans 111 residues: uncharacterized protein (111 aa).

The disordered stretch occupies residues 1–85; it reads MTGLMKAFQK…TSSREDEQKL (85 aa). Over residues 11 to 23 the composition is skewed to polar residues; sequence LSPTKRQYAEITQ. Over residues 24 to 42 the composition is skewed to low complexity; it reads SNSSISSSSSGSKYNDSSS. The span at 56-77 shows a compositional bias: polar residues; that stretch reads ARASTSTQAQKPASSQQKGGTS.

This is an uncharacterized protein from Microplitis demolitor (Parasitoid wasp).